The primary structure comprises 88 residues: Small ribosomal subunit protein uS15c (88 aa).

The protein belongs to the universal ribosomal protein uS15 family. In terms of assembly, part of the 30S ribosomal subunit.

It localises to the plastid. The protein resides in the chloroplast. In Marchantia polymorpha (Common liverwort), this protein is Small ribosomal subunit protein uS15c (rps15).